Reading from the N-terminus, the 360-residue chain is F420-dependent hydroxymycolic acid dehydrogenase (360 aa).

Residues 1 to 40 (MTGISRRTFGLAAGFGAIGAGGLGGGCSTRSGPTPTPEPA) constitute a signal peptide (tat-type signal). Asp77 contributes to the coenzyme F420-(gamma-Glu)n binding site. His78 functions as the Proton donor in the catalytic mechanism. A coenzyme F420-(gamma-Glu)n-binding site is contributed by 145–146 (TG). Glu147 serves as the catalytic Proton acceptor. Coenzyme F420-(gamma-Glu)n contacts are provided by residues Asn150 and 213 to 214 (SG).

It belongs to the F420-dependent hydroxymycolic acid dehydrogenase family. As to quaternary structure, homodimer. Is exported by the Tat system. The position of the signal peptide cleavage has not been experimentally proven. Post-translationally, may be lipidated.

The protein localises to the cell envelope. It functions in the pathway lipid metabolism; mycolic acid biosynthesis. Its activity is regulated as follows. Is inhibited by the anti-tuberculous drug PA-824, a bicyclic 4-nitroimidazole class compound. Therefore, this is consistent with the finding that PA-824 inhibits the formation of K-MAs and causes an accumulation of hydroxymycolic acids (H-MAs) in M.tuberculosis. Its function is as follows. Catalyzes the coenzyme F420-dependent oxidation of hydroxymycolic acids (H-MAs) to ketomycolic acids (K-MAs), a lipid class making up the mycobacterial pseudo-outer membrane and over one-third of the dry weight of M.tuberculosis. Does not exhibit F420-dependent glucose-6-phosphate dehydrogenase (FGD) activity. This chain is F420-dependent hydroxymycolic acid dehydrogenase, found in Mycobacterium tuberculosis (strain ATCC 25618 / H37Rv).